The chain runs to 418 residues: Serine--tRNA ligase (418 aa).

227-229 (TSE) lines the L-serine pocket. Residues 258-260 (RRE) and Val274 each bind ATP. Residue Glu281 coordinates L-serine. Residue 345-348 (ELTS) coordinates ATP. Position 380 (Thr380) interacts with L-serine.

It belongs to the class-II aminoacyl-tRNA synthetase family. Type-1 seryl-tRNA synthetase subfamily. Homodimer. The tRNA molecule binds across the dimer.

The protein localises to the cytoplasm. It catalyses the reaction tRNA(Ser) + L-serine + ATP = L-seryl-tRNA(Ser) + AMP + diphosphate + H(+). The catalysed reaction is tRNA(Sec) + L-serine + ATP = L-seryl-tRNA(Sec) + AMP + diphosphate + H(+). Its pathway is aminoacyl-tRNA biosynthesis; selenocysteinyl-tRNA(Sec) biosynthesis; L-seryl-tRNA(Sec) from L-serine and tRNA(Sec): step 1/1. In terms of biological role, catalyzes the attachment of serine to tRNA(Ser). Is also able to aminoacylate tRNA(Sec) with serine, to form the misacylated tRNA L-seryl-tRNA(Sec), which will be further converted into selenocysteinyl-tRNA(Sec). This Rhodococcus jostii (strain RHA1) protein is Serine--tRNA ligase.